The primary structure comprises 662 residues: Probable quinol oxidase subunit 1 (662 aa).

The next 2 helical transmembrane spans lie at 14–34 and 58–78; these read WMIT…IAVI and VMYL…ALLI. Residue histidine 102 participates in Fe(II)-heme a binding. The next 8 helical transmembrane spans lie at 103–123, 140–160, 187–207, 228–248, 273–293, 311–331, 336–356, and 376–396; these read GVIM…NIVV, VSFW…IIGG, IAIQ…FVTI, FITT…LALM, FFWV…FGIY, MVWA…HHFF, GALI…PTGV, and MLFS…GVML. Cu cation contacts are provided by histidine 279, tyrosine 283, histidine 328, and histidine 329. The segment at residues 279-283 is a cross-link (1'-histidyl-3'-tyrosine (His-Tyr)); the sequence is HPEVY. Histidine 414 is a heme a3 binding site. 5 consecutive transmembrane segments (helical) span residues 415–435, 451–471, 493–513, 587–604, and 608–627; these read FHYT…IFWY, CFWF…ILGL, ISTI…VSIV, PVGF…FFLI, and VIPA…YRSF. Histidine 416 provides a ligand contact to Fe(II)-heme a.

It belongs to the heme-copper respiratory oxidase family. Requires Cu cation as cofactor. Ferriheme a serves as cofactor. The cofactor is Heme A3..

The protein resides in the cell membrane. It carries out the reaction 2 a quinol + O2 = 2 a quinone + 2 H2O. It functions in the pathway energy metabolism; oxidative phosphorylation. Its function is as follows. Catalyzes quinol oxidation with the concomitant reduction of oxygen to water. This Staphylococcus aureus (strain COL) protein is Probable quinol oxidase subunit 1 (qoxB).